Consider the following 420-residue polypeptide: Gamma-glutamyl phosphate reductase (420 aa).

Belongs to the gamma-glutamyl phosphate reductase family.

It localises to the cytoplasm. The catalysed reaction is L-glutamate 5-semialdehyde + phosphate + NADP(+) = L-glutamyl 5-phosphate + NADPH + H(+). It participates in amino-acid biosynthesis; L-proline biosynthesis; L-glutamate 5-semialdehyde from L-glutamate: step 2/2. Its function is as follows. Catalyzes the NADPH-dependent reduction of L-glutamate 5-phosphate into L-glutamate 5-semialdehyde and phosphate. The product spontaneously undergoes cyclization to form 1-pyrroline-5-carboxylate. This is Gamma-glutamyl phosphate reductase from Chlorobaculum parvum (strain DSM 263 / NCIMB 8327) (Chlorobium vibrioforme subsp. thiosulfatophilum).